A 390-amino-acid polypeptide reads, in one-letter code: Altered inheritance of mitochondria protein 6 (390 aa).

An N-terminal signal peptide occupies residues 1–17 (MLGLKGCLTILIGYVIA).

This sequence belongs to the AIM6 family.

The protein is Altered inheritance of mitochondria protein 6 of Saccharomyces cerevisiae (strain ATCC 204508 / S288c) (Baker's yeast).